The chain runs to 102 residues: MKDQKIRIRLKAYDYKLLDRSVEEIVETARRTGARIAGPVPLPTEINKYCVNRSPHVDKKSREQFEIRTHKRLIDIIEPTQSTVDALMKLDLSAGVDVEIKA.

This sequence belongs to the universal ribosomal protein uS10 family. Part of the 30S ribosomal subunit.

Its function is as follows. Involved in the binding of tRNA to the ribosomes. This Syntrophus aciditrophicus (strain SB) protein is Small ribosomal subunit protein uS10.